Consider the following 177-residue polypeptide: Thymidine kinase (177 aa).

11–18 is a binding site for ATP; that stretch reads GPMFSGKS. Glu-83 functions as the Proton acceptor in the catalytic mechanism. Phe-113 provides a ligand contact to substrate. The Zn(2+) site is built by Cys-138 and Cys-141. 157–161 contributes to the substrate binding site; sequence IEIIG. Positions 170 and 173 each coordinate Zn(2+).

The protein belongs to the thymidine kinase family. In terms of assembly, homotetramer. Two molecules of substrate bind to each enzyme tetramer.

The catalysed reaction is thymidine + ATP = dTMP + ADP + H(+). Its function is as follows. Phosphorylates thymidine and thymidine analogs, such as azidothymidine (AZT). Part of the salvage pathway for pyrimidine deoxyribonucleotide synthesis. This Variola virus (isolate Human/India/Ind3/1967) (VARV) protein is Thymidine kinase (OPG101).